The following is a 1345-amino-acid chain: CRISPR-associated endonuclease Cas9 (1345 aa).

The active-site For RuvC-like nuclease domain is Asp10. Mg(2+) contacts are provided by Asp10, Glu762, and Glu766. In terms of domain architecture, HNH Cas9-type spans 770-921; it reads TNQGRRNSQQ…DKAGFIKRQL (152 aa). Catalysis depends on His840, which acts as the Proton acceptor for HNH nuclease domain. His983 lines the Mg(2+) pocket.

It belongs to the CRISPR-associated protein Cas9 family. Subtype II-A subfamily. Monomer. Binds crRNA and tracrRNA. Requires Mg(2+) as cofactor.

Its function is as follows. CRISPR (clustered regularly interspaced short palindromic repeat) is an adaptive immune system that provides protection against mobile genetic elements (viruses, transposable elements and conjugative plasmids). CRISPR clusters contain spacers, sequences complementary to antecedent mobile elements, and target invading nucleic acids. CRISPR clusters are transcribed and processed into CRISPR RNA (crRNA). In type II CRISPR systems correct processing of pre-crRNA requires a trans-encoded small RNA (tracrRNA), endogenous ribonuclease 3 (rnc) and this protein. The tracrRNA serves as a guide for ribonuclease 3-aided processing of pre-crRNA. Subsequently Cas9/crRNA/tracrRNA endonucleolytically cleaves linear or circular dsDNA target complementary to the spacer; Cas9 is inactive in the absence of the 2 guide RNAs (gRNA). Cas9 recognizes the protospacer adjacent motif (PAM) in the CRISPR repeat sequences to help distinguish self versus nonself, as targets within the bacterial CRISPR locus do not have PAMs. PAM recognition is also required for catalytic activity. Complements the gRNA coprocessing defect in a cas9 deletion in S.pyogenes strain 370 and cuts target plasmid in Cas9:gRNAs mixing experiments with S.thermophilus CRISPR3 from strain LMD-9. This chain is CRISPR-associated endonuclease Cas9, found in Streptococcus mutans serotype c (strain ATCC 700610 / UA159).